We begin with the raw amino-acid sequence, 64 residues long: Alpha-like toxin BmK M2 (64 aa).

An LCN-type CS-alpha/beta domain is found at 2 to 64; it reads RDAYIAKPHN…VPIRVPGKCH (63 aa). Disulfide bonds link Cys12–Cys63, Cys16–Cys36, Cys22–Cys46, and Cys26–Cys48.

The protein belongs to the long (4 C-C) scorpion toxin superfamily. Sodium channel inhibitor family. Alpha subfamily. As to expression, expressed by the venom gland.

The protein resides in the secreted. In terms of biological role, alpha toxins bind voltage-independently at site-3 of sodium channels (Nav) and inhibit the inactivation of the activated channels, thereby blocking neuronal transmission. This toxin is active against both mammals and insects, and is classified as an alpha-like toxin. The chain is Alpha-like toxin BmK M2 from Olivierus martensii (Manchurian scorpion).